Consider the following 264-residue polypeptide: Ribonuclease HII (264 aa).

The RNase H type-2 domain maps to 69–263 (KVVCGIDEVG…EENAKTITKP (195 aa)). Residues Asp-75, Glu-76, and Asp-166 each contribute to the a divalent metal cation site.

Belongs to the RNase HII family. Mn(2+) serves as cofactor. Requires Mg(2+) as cofactor.

It is found in the cytoplasm. The enzyme catalyses Endonucleolytic cleavage to 5'-phosphomonoester.. Its function is as follows. Endonuclease that specifically degrades the RNA of RNA-DNA hybrids. The polypeptide is Ribonuclease HII (Macrococcus caseolyticus (strain JCSC5402) (Macrococcoides caseolyticum)).